The following is a 192-amino-acid chain: Orotate phosphoribosyltransferase (192 aa).

5-phospho-alpha-D-ribose 1-diphosphate-binding positions include R101, K102, K105, H107, and 129 to 137 (EDVITTGGS). The orotate site is built by T133 and R161.

This sequence belongs to the purine/pyrimidine phosphoribosyltransferase family. PyrE subfamily. As to quaternary structure, homodimer. Mg(2+) serves as cofactor.

It carries out the reaction orotidine 5'-phosphate + diphosphate = orotate + 5-phospho-alpha-D-ribose 1-diphosphate. It participates in pyrimidine metabolism; UMP biosynthesis via de novo pathway; UMP from orotate: step 1/2. Functionally, catalyzes the transfer of a ribosyl phosphate group from 5-phosphoribose 1-diphosphate to orotate, leading to the formation of orotidine monophosphate (OMP). The polypeptide is Orotate phosphoribosyltransferase (Sorangium cellulosum (strain So ce56) (Polyangium cellulosum (strain So ce56))).